Reading from the N-terminus, the 142-residue chain is Lipoprotein MlpI (142 aa).

The first 17 residues, 1 to 17, serve as a signal peptide directing secretion; sequence MKIINILFCLFLLMLNS. Residue cysteine 18 is the site of N-palmitoyl cysteine attachment. Residue cysteine 18 is the site of S-diacylglycerol cysteine attachment. Positions 22–54 are disordered; that stretch reads DTNTSQTKSRQKRDLTQKEATQEKPKSKEDLLR. Over residues 33–54 the composition is skewed to basic and acidic residues; the sequence is KRDLTQKEATQEKPKSKEDLLR.

It belongs to the Multicopy lipoprotein (Mlp) family.

Its subcellular location is the cell outer membrane. Its function is as follows. An outer membrane protein that may participate in pathogenesis. Some human Lyme disease patients have antibodies against this protein. The Mlp proteins probably undergo intragenic recombination, generating new alleles. In Borreliella burgdorferi (strain ATCC 35210 / DSM 4680 / CIP 102532 / B31) (Borrelia burgdorferi), this protein is Lipoprotein MlpI.